A 261-amino-acid polypeptide reads, in one-letter code: tRNA pseudouridine synthase A (261 aa).

Residue Asp-51 is the Nucleophile of the active site. Tyr-109 contributes to the substrate binding site.

The protein belongs to the tRNA pseudouridine synthase TruA family. As to quaternary structure, homodimer.

It carries out the reaction uridine(38/39/40) in tRNA = pseudouridine(38/39/40) in tRNA. In terms of biological role, formation of pseudouridine at positions 38, 39 and 40 in the anticodon stem and loop of transfer RNAs. The protein is tRNA pseudouridine synthase A of Shewanella piezotolerans (strain WP3 / JCM 13877).